The following is a 305-amino-acid chain: N-acetyl-D-glucosamine kinase (305 aa).

ATP contacts are provided by residues 4-11 (GFDIGGTK) and 133-140 (GFGGGLVF). Zn(2+) is bound by residues His157, Cys178, Cys180, and Cys185.

This sequence belongs to the ROK (NagC/XylR) family. NagK subfamily.

It catalyses the reaction N-acetyl-D-glucosamine + ATP = N-acetyl-D-glucosamine 6-phosphate + ADP + H(+). The protein operates within cell wall biogenesis; peptidoglycan recycling. Catalyzes the phosphorylation of N-acetyl-D-glucosamine (GlcNAc) derived from cell-wall degradation, yielding GlcNAc-6-P. The polypeptide is N-acetyl-D-glucosamine kinase (Histophilus somni (strain 129Pt) (Haemophilus somnus)).